Reading from the N-terminus, the 130-residue chain is Large ribosomal subunit protein bL19 (130 aa).

This sequence belongs to the bacterial ribosomal protein bL19 family.

Functionally, this protein is located at the 30S-50S ribosomal subunit interface and may play a role in the structure and function of the aminoacyl-tRNA binding site. The chain is Large ribosomal subunit protein bL19 from Burkholderia orbicola (strain MC0-3).